The sequence spans 412 residues: Peptidase T (412 aa).

H84 provides a ligand contact to Zn(2+). The active site involves D86. Residue D146 participates in Zn(2+) binding. E179 acts as the Proton acceptor in catalysis. Residues E180, D202, and H385 each coordinate Zn(2+).

This sequence belongs to the peptidase M20B family. It depends on Zn(2+) as a cofactor.

The protein localises to the cytoplasm. The enzyme catalyses Release of the N-terminal residue from a tripeptide.. Its function is as follows. Cleaves the N-terminal amino acid of tripeptides. The sequence is that of Peptidase T from Pasteurella multocida (strain Pm70).